A 1517-amino-acid chain; its full sequence is MSKFKVIEIKEDARPRDFEAFQLRLASPEKIKSWSYGEVKKPETINYRTLKPERDGLFCAKIFGPIRDYECLCGKYKKMRFKGVKCEKCGVEVANSKVRRSRMGHIELVTPVAHIWYVNSLPSRIGTLLGVKMKDLERVLYYEAYIVENPGDAFYDNESTKKVEYCDVLNEEQYQNLMQRYENSGFKARMGGEVVRDLLANLDLVALLNQLKEEMGATNSEAKKKTIIKRLKVVENFLNSNLNANTDSDEAVPNRPEWMMITNLPVLPPDLRPLVALDGGKFAVSDVNDLYRRVINRNTRLKKLMELDAPEIIIRNEKRMLQEAVDALFDNGRRANAVKGANKRPLKSLSEIIKGKQGRFRQNLLGKRVDFSGRSVIVVGPKLRMDQCGLPKKMALELFKPHLLAKLEEKGYATTVKQAKKMIENKTNEVWECLEEVVKGHPVMLNRAPTLHKLSIQAFHPVLVEGKAIQLHPLVCAAFNADFDGDQMAVHVPLSQEAIAECKVLMLSSMNILLPASGKSVTVPSQDMVLGIYYLSLEKAGAKGSHKICTGIDEVMMALESKCLDIHASIQTMVDGRKITTTAGRLIVKSILPDFVPENSWNKVLKKKDIAALVDYVYKQGGLEITASFLDRLKNLGFEYATKAGISISIADIIVPNDKQKAIDEAKKQVREIQNSYNLGLITSGERYNKIIDIWKSTNNVLSKEMMKLVEKDKEGFNSIYMMADSGARGSAAQISQLAAMRGLMTKPDGSIIETPIISNFREGLNVLEYFISTHGARKGLADTALKTANAGYLTRKLIDVAQNVKITIEDCGTHEGVEINEITADSSIIETLEERILGRVLAEDVIDPITNSVLFAEGTLMDEEKAKILGESGIKSVNIRTPITCKAKKGICAKCYGINLGEGKLVKPGEAVGIISAQSIGEPGTQLTLRTFHSGGTASTDLQDRQVSAQKEGFIRFYNLKTYKNKEGKNIVANRRNAAVLLVEPKIKTPFKGVINIENIHEDVIVSIKDKKQEVKYILRKYDLAKPNELAGVSGSIDGKLYLPYQSGMQVEENESIVEVIKEGWNVPNRIPFASEILVEDGEPVVQNIKAGEKGTLKFYILKGDGLDRVKNVKKGDIVKEKGFFVVIADENDREAKRHYIPRESKIEFNDSEKIDDANTIIASAPKKERKVIAEWDAYNNTIIAEIDGVVSFEDIEAGYSADEQIDEATGKRSLVINEYLPSGVRPTLVIAGKGDKAVRYHLEPKTVIFVHDGDKIAQADILAKTPKAAAKSKDITGGLPRVSELFEARKPKNAAVIAEIDGVVRFDKPLRSKERIIIQAEDGTSAEYLIDKSKHIQVRDGEFIHAGEKLTDGVVSSHDVLKILGEKALHYYLISEIQQVYRGQGVVISDKHIEVIVSQMLRQVKVVDSGHTKFIEGDLVSRRKFREENERIIRMGGEPAIAEPVLLGVTRAAIGSDSVISAASFQETTKVLTEASIAGKFDYLEDLKENVILGRMIPVGTGLYGEQNLKLKEQE.

Zn(2+) contacts are provided by C71, C73, C86, and C89. Mg(2+) contacts are provided by D482, D484, and D486. Residues C812, C886, C893, and C896 each contribute to the Zn(2+) site.

Belongs to the RNA polymerase beta' chain family. As to quaternary structure, the RNAP catalytic core consists of 2 alpha, 1 beta, 1 beta' and 1 omega subunit. When a sigma factor is associated with the core the holoenzyme is formed, which can initiate transcription. The cofactor is Mg(2+). Requires Zn(2+) as cofactor.

The enzyme catalyses RNA(n) + a ribonucleoside 5'-triphosphate = RNA(n+1) + diphosphate. In terms of biological role, DNA-dependent RNA polymerase catalyzes the transcription of DNA into RNA using the four ribonucleoside triphosphates as substrates. The sequence is that of DNA-directed RNA polymerase subunit beta' from Campylobacter jejuni subsp. jejuni serotype O:2 (strain ATCC 700819 / NCTC 11168).